Here is a 434-residue protein sequence, read N- to C-terminus: 3-phosphoshikimate 1-carboxyvinyltransferase (434 aa).

Lysine 22, serine 23, and arginine 27 together coordinate 3-phosphoshikimate. Lysine 22 serves as a coordination point for phosphoenolpyruvate. Residues glycine 94 and arginine 122 each contribute to the phosphoenolpyruvate site. Residues serine 169, serine 170, glutamine 171, serine 199, aspartate 320, and lysine 347 each contribute to the 3-phosphoshikimate site. Glutamine 171 provides a ligand contact to phosphoenolpyruvate. Aspartate 320 serves as the catalytic Proton acceptor. The phosphoenolpyruvate site is built by arginine 351, arginine 395, and lysine 420.

It belongs to the EPSP synthase family. In terms of assembly, monomer.

It localises to the cytoplasm. The enzyme catalyses 3-phosphoshikimate + phosphoenolpyruvate = 5-O-(1-carboxyvinyl)-3-phosphoshikimate + phosphate. Its pathway is metabolic intermediate biosynthesis; chorismate biosynthesis; chorismate from D-erythrose 4-phosphate and phosphoenolpyruvate: step 6/7. Functionally, catalyzes the transfer of the enolpyruvyl moiety of phosphoenolpyruvate (PEP) to the 5-hydroxyl of shikimate-3-phosphate (S3P) to produce enolpyruvyl shikimate-3-phosphate and inorganic phosphate. The protein is 3-phosphoshikimate 1-carboxyvinyltransferase of Ralstonia pickettii (strain 12J).